The chain runs to 126 residues: Small ribosomal subunit protein uS8 (126 aa).

Belongs to the universal ribosomal protein uS8 family. In terms of assembly, part of the 30S ribosomal subunit. Contacts proteins S5 and S12.

One of the primary rRNA binding proteins, it binds directly to 16S rRNA central domain where it helps coordinate assembly of the platform of the 30S subunit. In Nitratidesulfovibrio vulgaris (strain ATCC 29579 / DSM 644 / CCUG 34227 / NCIMB 8303 / VKM B-1760 / Hildenborough) (Desulfovibrio vulgaris), this protein is Small ribosomal subunit protein uS8.